The chain runs to 66 residues: Regulator of G-protein signaling 6 (66 aa).

The RGS domain maps to leucine 1–leucine 66.

In terms of assembly, interacts with GNB5. Interacts with RGS7BP, leading to regulate the subcellular location of the heterodimer formed with GNB5. Interacts with GNAI1.

It is found in the cytoplasm. The protein resides in the cytosol. Its subcellular location is the membrane. It localises to the nucleus. The protein localises to the cell membrane. Regulates G protein-coupled receptor signaling cascades. Inhibits signal transduction by increasing the GTPase activity of G protein alpha subunits, thereby driving them into their inactive GDP-bound form. The RGS6/GNB5 dimer enhances GNAO1 GTPase activity. This is Regulator of G-protein signaling 6 (Rgs6) from Rattus norvegicus (Rat).